The chain runs to 308 residues: Very-long-chain enoyl-CoA reductase (308 aa).

Residues 1–86 lie on the Cytoplasmic side of the membrane; the sequence is MKHYEVEILD…YFRDLGAQIS (86 aa). Lysine 22 carries the N6-acetyllysine modification. A Phosphoserine modification is found at serine 58. Lysine 60 carries the post-translational modification N6-acetyllysine. The helical transmembrane segment at 87-106 threads the bilayer; it reads WVTVFLTEYAGPLFIYLLFY. The Lumenal segment spans residues 107–124; that stretch reads FRVPFIYGHKYDFTSSRH. The helical transmembrane segment at 125-147 threads the bilayer; the sequence is TVVHLACICHSFHYIKRLLETLF. The Cytoplasmic segment spans residues 148-158; it reads VHRFSHGTMPL. A helical transmembrane segment spans residues 159–180; it reads RNIFKNCTYYWGFAAWMAYYIN. Residues 181–189 lie on the Lumenal side of the membrane; the sequence is HPLYTPPTY. The helical transmembrane segment at 190–216 threads the bilayer; it reads GAQQVKLALAIFVICQLGNFSIHMALR. Residues 217–245 lie on the Cytoplasmic side of the membrane; that stretch reads DLRPAGSKTRKIPYPTKNPFTWLFLLVSC. Residues 246–262 form a helical membrane-spanning segment; it reads PNYTYEVGSWIGFAIMT. The Lumenal portion of the chain corresponds to 263-264; the sequence is QC. Residues 265 to 292 form a helical membrane-spanning segment; sequence LPVALFSLVGFTQMTIWAKGKHRSYLKE. At 293–308 the chain is on the cytoplasmic side; it reads FRDYPPLRMPIIPFLL.

Belongs to the steroid 5-alpha reductase family. Interacts with ELOVL1 and LASS2. Interacts with HACD1 and HACD2 (via the third lumenal loop), but not with HACD3 and HACD4. Interacts with ELOVL1, ELOVL2, ELOVL3, ELOVL5 and ELOVL7 in the presence of acyl-CoA; interaction with HACD1/2 and that with ELOVLs are mutually exclusive. In terms of processing, glycosylated. As to expression, expressed in most tissues tested. Highly expressed in skeletal muscle.

The protein localises to the endoplasmic reticulum membrane. It catalyses the reaction a very-long-chain 2,3-saturated fatty acyl-CoA + NADP(+) = a very-long-chain (2E)-enoyl-CoA + NADPH + H(+). The catalysed reaction is octadecanoyl-CoA + NADP(+) = (2E)-octadecenoyl-CoA + NADPH + H(+). The enzyme catalyses (2E,7Z,10Z,13Z,16Z)-docosapentaenoyl-CoA + NADPH + H(+) = (7Z,10Z,13Z,16Z)-docosatetraenoyl-CoA + NADP(+). It carries out the reaction (2E,7Z,10Z,13Z,16Z,19Z)-docosahexaenoyl-CoA + NADPH + H(+) = (7Z,10Z,13Z,16Z,19Z)-docosapentaenoyl-CoA + NADP(+). It catalyses the reaction (2E,8Z,11Z,14Z)-eicosatetraenoyl-CoA + NADPH + H(+) = (8Z,11Z,14Z)-eicosatrienoyl-CoA + NADP(+). The catalysed reaction is (2E)-hexadecenoyl-CoA + NADPH + H(+) = hexadecanoyl-CoA + NADP(+). The protein operates within lipid metabolism; fatty acid biosynthesis. It functions in the pathway lipid metabolism; sphingolipid metabolism. Its function is as follows. Involved in both the production of very long-chain fatty acids for sphingolipid synthesis and the degradation of the sphingosine moiety in sphingolipids through the sphingosine 1-phosphate metabolic pathway. Catalyzes the last of the four reactions of the long-chain fatty acids elongation cycle. This endoplasmic reticulum-bound enzymatic process, allows the addition of 2 carbons to the chain of long- and very long-chain fatty acids/VLCFAs per cycle. This enzyme reduces the trans-2,3-enoyl-CoA fatty acid intermediate to an acyl-CoA that can be further elongated by entering a new cycle of elongation. Thereby, it participates in the production of VLCFAs of different chain lengths that are involved in multiple biological processes as precursors of membrane lipids and lipid mediators. Catalyzes the saturation step of the sphingosine 1-phosphate metabolic pathway, the conversion of trans-2-hexadecenoyl-CoA to palmitoyl-CoA. The sequence is that of Very-long-chain enoyl-CoA reductase (TECR) from Homo sapiens (Human).